The primary structure comprises 138 residues: Protein SchB (138 aa).

Positions 42 to 108 (VAVVRPGERI…NTGDVEARLV (67 aa)) constitute a Cupin type-2 domain. The segment at 118–138 (PDLGHVDTEETDETAPAGVVS) is disordered.

Belongs to the SchB/CurC family.

The protein is Protein SchB (schB) of Streptomyces halstedii.